A 187-amino-acid chain; its full sequence is Elongation factor P (187 aa).

The protein belongs to the elongation factor P family.

Its subcellular location is the cytoplasm. Its pathway is protein biosynthesis; polypeptide chain elongation. Its function is as follows. Involved in peptide bond synthesis. Stimulates efficient translation and peptide-bond synthesis on native or reconstituted 70S ribosomes in vitro. Probably functions indirectly by altering the affinity of the ribosome for aminoacyl-tRNA, thus increasing their reactivity as acceptors for peptidyl transferase. The chain is Elongation factor P from Gloeobacter violaceus (strain ATCC 29082 / PCC 7421).